A 218-amino-acid polypeptide reads, in one-letter code: MGQKVNPIGLRIGIIRDWESRWYAEKDYADLLHEDLKVREYINKRLQDAAVSRVEIERAANRVNVTIHTAKPGMVIGKGGSEVEALRKALAQLTGKRVHINIVEIKKPDLDAKLVAENIARQLENRVSFRRAQKQAIQRAMRAGAKGIKTMVSGRLGGADIARSEHYSEGTVPLHTLRADIDYATAEADTTYGKIGVKVWIYRGEVLPTKKKAEEGGK.

The 69-residue stretch at 38–106 folds into the KH type-2 domain; sequence VREYINKRLQ…RVHINIVEIK (69 aa).

This sequence belongs to the universal ribosomal protein uS3 family. In terms of assembly, part of the 30S ribosomal subunit. Forms a tight complex with proteins S10 and S14.

Binds the lower part of the 30S subunit head. Binds mRNA in the 70S ribosome, positioning it for translation. The polypeptide is Small ribosomal subunit protein uS3 (Geobacillus thermodenitrificans (strain NG80-2)).